The primary structure comprises 208 residues: 3-demethoxyubiquinol 3-hydroxylase (208 aa).

Positions 57, 87, 90, 139, 171, and 174 each coordinate Fe cation.

This sequence belongs to the COQ7 family. Requires Fe cation as cofactor.

The protein resides in the cell membrane. It catalyses the reaction a 5-methoxy-2-methyl-3-(all-trans-polyprenyl)benzene-1,4-diol + AH2 + O2 = a 3-demethylubiquinol + A + H2O. Its pathway is cofactor biosynthesis; ubiquinone biosynthesis. In terms of biological role, catalyzes the hydroxylation of 2-nonaprenyl-3-methyl-6-methoxy-1,4-benzoquinol during ubiquinone biosynthesis. The polypeptide is 3-demethoxyubiquinol 3-hydroxylase (Burkholderia lata (strain ATCC 17760 / DSM 23089 / LMG 22485 / NCIMB 9086 / R18194 / 383)).